A 499-amino-acid polypeptide reads, in one-letter code: Glutamyl-tRNA(Gln) amidotransferase subunit A (499 aa).

Catalysis depends on charge relay system residues K80 and S155. S179 serves as the catalytic Acyl-ester intermediate.

It belongs to the amidase family. GatA subfamily. Heterotrimer of A, B and C subunits.

The catalysed reaction is L-glutamyl-tRNA(Gln) + L-glutamine + ATP + H2O = L-glutaminyl-tRNA(Gln) + L-glutamate + ADP + phosphate + H(+). Allows the formation of correctly charged Gln-tRNA(Gln) through the transamidation of misacylated Glu-tRNA(Gln) in organisms which lack glutaminyl-tRNA synthetase. The reaction takes place in the presence of glutamine and ATP through an activated gamma-phospho-Glu-tRNA(Gln). This chain is Glutamyl-tRNA(Gln) amidotransferase subunit A, found in Cupriavidus metallidurans (strain ATCC 43123 / DSM 2839 / NBRC 102507 / CH34) (Ralstonia metallidurans).